Consider the following 417-residue polypeptide: Phosphoglycerate kinase (417 aa).

(2R)-3-phosphoglycerate contacts are provided by Val-23, Asp-24, Phe-25, Asn-26, Gln-38, Arg-39, Ser-62, His-63, Gly-65, Arg-66, Leu-122, Arg-123, His-170, and Arg-171. Gly-214 contacts ADP. Gly-214 lines the CDP pocket. Residues Ala-215 and Lys-216 each coordinate AMP. Ala-215 is an ATP binding site. Ala-215 is a binding site for Mg(2+). Residue Asp-219 coordinates CDP. Position 219 (Asp-219) interacts with Mg(2+). Position 220 (Lys-220) interacts with AMP. Lys-220 is a binding site for ATP. Gly-238 lines the ADP pocket. Residue Gly-238 coordinates CDP. Gly-239 and Gly-313 together coordinate AMP. Positions 239 and 313 each coordinate ATP. The CDP site is built by Gly-338, Val-340, and Phe-343. Phe-343 serves as a coordination point for ADP. Glu-344 contacts AMP. 3 residues coordinate ATP: Glu-344, Asp-375, and Thr-376. A Mg(2+)-binding site is contributed by Asp-375.

This sequence belongs to the phosphoglycerate kinase family. Monomer. Mg(2+) is required as a cofactor.

Its subcellular location is the cytoplasm. The enzyme catalyses (2R)-3-phosphoglycerate + ATP = (2R)-3-phospho-glyceroyl phosphate + ADP. Its pathway is carbohydrate degradation; glycolysis; pyruvate from D-glyceraldehyde 3-phosphate: step 2/5. Functionally, catalyzes one of the two ATP producing reactions in the glycolytic pathway via the reversible conversion of 1,3-diphosphoglycerate to 3-phosphoglycerate. In addition to its role as a glycolytic enzyme, it seems that PGK-1 acts as a polymerase alpha cofactor protein (primer recognition protein). May play a role in sperm motility. This is Phosphoglycerate kinase (PGK) from Gallus gallus (Chicken).